The sequence spans 106 residues: Thiosulfate sulfurtransferase GlpE (106 aa).

The Rhodanese domain maps to 17–105 (QLPSVCLADI…WRHVYPYTAT (89 aa)). The Cysteine persulfide intermediate role is filled by Cys65.

This sequence belongs to the GlpE family.

It is found in the cytoplasm. It carries out the reaction thiosulfate + hydrogen cyanide = thiocyanate + sulfite + 2 H(+). The catalysed reaction is thiosulfate + [thioredoxin]-dithiol = [thioredoxin]-disulfide + hydrogen sulfide + sulfite + 2 H(+). In terms of biological role, transferase that catalyzes the transfer of sulfur from thiosulfate to thiophilic acceptors such as cyanide or dithiols. May function in a CysM-independent thiosulfate assimilation pathway by catalyzing the conversion of thiosulfate to sulfite, which can then be used for L-cysteine biosynthesis. This is Thiosulfate sulfurtransferase GlpE from Tolumonas auensis (strain DSM 9187 / NBRC 110442 / TA 4).